The sequence spans 161 residues: Calmodulin-like protein (161 aa).

EF-hand domains lie at 21 to 56 (EEID…LGQN), 57 to 92 (PTEQ…MMKE), 93 to 128 (TDSE…MGMQ), and 129 to 161 (FSEE…MSNQ). Ca(2+)-binding residues include D34, D36, N38, T40, E45, D70, D72, N74, Q76, E81, D106, D108, N110, E117, D142, D144, D146, E148, and E153.

The protein belongs to the calmodulin family.

This protein resembles calmodulin in sequence but possibly resembles troponin C in function. The chain is Calmodulin-like protein (cal-1) from Caenorhabditis elegans.